We begin with the raw amino-acid sequence, 195 residues long: ATP-dependent Clp protease proteolytic subunit (195 aa).

S98 serves as the catalytic Nucleophile. H123 is an active-site residue.

The protein belongs to the peptidase S14 family. Fourteen ClpP subunits assemble into 2 heptameric rings which stack back to back to give a disk-like structure with a central cavity, resembling the structure of eukaryotic proteasomes.

It localises to the cytoplasm. The enzyme catalyses Hydrolysis of proteins to small peptides in the presence of ATP and magnesium. alpha-casein is the usual test substrate. In the absence of ATP, only oligopeptides shorter than five residues are hydrolyzed (such as succinyl-Leu-Tyr-|-NHMec, and Leu-Tyr-Leu-|-Tyr-Trp, in which cleavage of the -Tyr-|-Leu- and -Tyr-|-Trp bonds also occurs).. Functionally, cleaves peptides in various proteins in a process that requires ATP hydrolysis. Has a chymotrypsin-like activity. Plays a major role in the degradation of misfolded proteins. This is ATP-dependent Clp protease proteolytic subunit from Sulfurovum sp. (strain NBC37-1).